A 412-amino-acid polypeptide reads, in one-letter code: 4-hydroxyphenylpyruvate dioxygenase (412 aa).

VOC domains lie at 31–179 (GYDH…LISR) and 209–369 (RIDH…LFTK). Fe cation contacts are provided by His212, His295, and Glu380.

It belongs to the 4HPPD family. Fe cation is required as a cofactor.

The enzyme catalyses 3-(4-hydroxyphenyl)pyruvate + O2 = homogentisate + CO2. The protein operates within amino-acid degradation; L-phenylalanine degradation; acetoacetate and fumarate from L-phenylalanine: step 3/6. The chain is 4-hydroxyphenylpyruvate dioxygenase from Neurospora crassa (strain ATCC 24698 / 74-OR23-1A / CBS 708.71 / DSM 1257 / FGSC 987).